The primary structure comprises 124 residues: Small ribosomal subunit protein bS6 (124 aa).

A disordered region spans residues 96–124 (ETAPSPMMKEVQREEARKAAQTTTEGQAA). Residues 115 to 124 (AQTTTEGQAA) show a composition bias toward polar residues.

This sequence belongs to the bacterial ribosomal protein bS6 family.

Its function is as follows. Binds together with bS18 to 16S ribosomal RNA. The chain is Small ribosomal subunit protein bS6 from Cupriavidus necator (strain ATCC 17699 / DSM 428 / KCTC 22496 / NCIMB 10442 / H16 / Stanier 337) (Ralstonia eutropha).